The primary structure comprises 457 residues: Putative hexose transporter 12 (457 aa).

Topologically, residues 1 to 2 (MG) are cytoplasmic. Residues 3–23 (LIVSIFNIGCAIGGIVLSKVG) traverse the membrane as a helical segment. At 24–29 (DIYGRR) the chain is on the extracellular side. Residues 30 to 50 (IGLITVTAIYVVGILIQITSI) traverse the membrane as a helical segment. Residues 51-60 (NKWYQYFIGR) lie on the Cytoplasmic side of the membrane. Residues 61-81 (IISGIGVGGIAVLSPMLISEV) form a helical membrane-spanning segment. Residues 82 to 87 (APKHIR) are Extracellular-facing. Residues 88–108 (GTLVQLYQLMGTMGIFLGYCT) form a helical membrane-spanning segment. The Cytoplasmic portion of the chain corresponds to 109–122 (NYGTKNYHNATQWR). A helical membrane pass occupies residues 123–143 (VGLGLCFAWATFMVSGMMFVP). Topologically, residues 144–247 (ESPRYLIEVG…KSVGLKDSFQ (104 aa)) are extracellular. N-linked (GlcNAc...) asparagine glycosylation occurs at Asn194. A helical transmembrane segment spans residues 248 to 268 (TSIIIGVVNFFSSFIAVYTIE). The Cytoplasmic portion of the chain corresponds to 269 to 274 (RFGRRT). Residues 275–295 (CLLWGAASMLCCFAVFASVGV) form a helical membrane-spanning segment. At 296 to 319 (TKLWPQGSSHQDITSQGAGNCMIV) the chain is on the extracellular side. Residues 320–340 (FTMFFIFSFATTWAGGCFVIV) traverse the membrane as a helical segment. Residues 341 to 353 (SETFPLRAKSRGM) are Cytoplasmic-facing. Residues 354–374 (AIATAANWMWGFLISFFTPFI) form a helical membrane-spanning segment. Residues 375-379 (TGAIN) are Extracellular-facing. The chain crosses the membrane as a helical span at residues 380–400 (FYYGYVFLGCLVFAYFYVFFF). At 401–457 (VPETKGLTLEEVNTMWLEGVPAWKSASWVPPERRTADYDADAIDHDNRPIYKRFFSS) the chain is on the cytoplasmic side.

Belongs to the major facilitator superfamily. Sugar transporter (TC 2.A.1.1) family.

It localises to the membrane. In terms of biological role, probable glucose transporter. This is Putative hexose transporter 12 (HXT12) from Saccharomyces cerevisiae (strain ATCC 204508 / S288c) (Baker's yeast).